Reading from the N-terminus, the 209-residue chain is Glycolipid transfer protein (209 aa).

Ala2 is modified (N-acetylalanine). Tandem repeats lie at residues 45–55 and 56–66. Residues 45-66 are 2 X 12 AA approximate tandem repeats; the sequence is IKADISGNITKIKAVYDTDPAK. 48-55 is a beta-D-galactosyl-(1-&gt;4)-beta-D-glucosyl-(1&lt;-&gt;1)-N-[(9Z)-octadecenoyl]-sphing-4-enine binding site; that stretch reads DISGNITK. The beta-D-galactosyl-(1-&gt;4)-beta-D-glucosyl-(1&lt;-&gt;1)-N-[(9Z)-octadecenoyl]-sphing-4-enine site is built by His140 and Tyr207.

Belongs to the GLTP family. In terms of assembly, monomer.

The protein resides in the cytoplasm. Its function is as follows. Accelerates the intermembrane transfer of various glycolipids. Catalyzes the transfer of various glycosphingolipids between membranes but does not catalyze the transfer of phospholipids. May be involved in the intracellular translocation of glucosylceramides. In Mus musculus (Mouse), this protein is Glycolipid transfer protein (Gltp).